Consider the following 141-residue polypeptide: Nucleoside diphosphate kinase (141 aa).

Residues lysine 11, phenylalanine 59, arginine 87, threonine 93, arginine 104, and asparagine 114 each contribute to the ATP site. The active-site Pros-phosphohistidine intermediate is the histidine 117.

This sequence belongs to the NDK family. Homotetramer. Mg(2+) serves as cofactor.

It localises to the cytoplasm. It carries out the reaction a 2'-deoxyribonucleoside 5'-diphosphate + ATP = a 2'-deoxyribonucleoside 5'-triphosphate + ADP. It catalyses the reaction a ribonucleoside 5'-diphosphate + ATP = a ribonucleoside 5'-triphosphate + ADP. Its function is as follows. Major role in the synthesis of nucleoside triphosphates other than ATP. The ATP gamma phosphate is transferred to the NDP beta phosphate via a ping-pong mechanism, using a phosphorylated active-site intermediate. The chain is Nucleoside diphosphate kinase from Acidovorax sp. (strain JS42).